A 387-amino-acid chain; its full sequence is 3-ketoacyl-CoA thiolase (387 aa).

Residue C91 is the Acyl-thioester intermediate of the active site. Catalysis depends on proton acceptor residues H343 and C373.

Belongs to the thiolase-like superfamily. Thiolase family. Heterotetramer of two alpha chains (FadB) and two beta chains (FadA).

The protein localises to the cytoplasm. The enzyme catalyses an acyl-CoA + acetyl-CoA = a 3-oxoacyl-CoA + CoA. It functions in the pathway lipid metabolism; fatty acid beta-oxidation. Its function is as follows. Catalyzes the final step of fatty acid oxidation in which acetyl-CoA is released and the CoA ester of a fatty acid two carbons shorter is formed. This Shigella flexneri serotype 5b (strain 8401) protein is 3-ketoacyl-CoA thiolase.